The following is a 517-amino-acid chain: Probable G-protein coupled receptor Mth-like 4 (517 aa).

Residues 1-18 (MRILLIAVLFLLMPKSNA) form the signal peptide. Residues 19–212 (EIPGCDFFDT…LSSEHSRTWK (194 aa)) lie on the Extracellular side of the membrane. 5 disulfide bridges follow: C23-C77, C79-C84, C88-C183, C89-C100, and C145-C201. N-linked (GlcNAc...) asparagine glycosylation occurs at N39. Residues N117 and N165 are each glycosylated (N-linked (GlcNAc...) asparagine). A helical membrane pass occupies residues 213–233 (TVAIVISLICIILTISVYLYV). Residues 234 to 242 (EKLRNLHGK) lie on the Cytoplasmic side of the membrane. A helical membrane pass occupies residues 243-263 (CFICYLASLFLGYFFLVLNVW). The Extracellular portion of the chain corresponds to 264 to 272 (KYSSGFCVT). Residues 273–293 (AGFLGYFSVMAAFFWLSVIGI) traverse the membrane as a helical segment. The Cytoplasmic portion of the chain corresponds to 294-319 (HLRIKFSLASNCLHRLLPENPFRAYN). A helical membrane pass occupies residues 320 to 340 (LYAWGIPLIMTAITYTADQVV). Over 341–363 (KNEKLRPRVGVGKNCWIYTGDMT) the chain is Extracellular. A helical membrane pass occupies residues 364–384 (VMIYFYGPMLLLIAFNIIMFV). Residues 385–414 (LSAIYIYNIKKNVKGLVHKQQTNQQINDQQ) lie on the Cytoplasmic side of the membrane. The chain crosses the membrane as a helical span at residues 415-435 (MFAIFLRLFILMGLSWSFEIL). Topologically, residues 436 to 459 (SFLLTKQQAWARALMVADYFNWSQ) are extracellular. N-linked (GlcNAc...) asparagine glycosylation is present at N456. A helical membrane pass occupies residues 460-480 (GTIIFVLFILKPSILKLIIAG). Topologically, residues 481 to 517 (GRQNLPGSHHNSRSKAARYNSTHTACEGSIADPNAYC) are cytoplasmic.

Belongs to the G-protein coupled receptor 2 family. Mth subfamily.

Its subcellular location is the cell membrane. The polypeptide is Probable G-protein coupled receptor Mth-like 4 (mthl4) (Drosophila melanogaster (Fruit fly)).